The primary structure comprises 481 residues: Aspartyl/glutamyl-tRNA(Asn/Gln) amidotransferase subunit B (481 aa).

The protein belongs to the GatB/GatE family. GatB subfamily. As to quaternary structure, heterotrimer of A, B and C subunits.

The enzyme catalyses L-glutamyl-tRNA(Gln) + L-glutamine + ATP + H2O = L-glutaminyl-tRNA(Gln) + L-glutamate + ADP + phosphate + H(+). The catalysed reaction is L-aspartyl-tRNA(Asn) + L-glutamine + ATP + H2O = L-asparaginyl-tRNA(Asn) + L-glutamate + ADP + phosphate + 2 H(+). Functionally, allows the formation of correctly charged Asn-tRNA(Asn) or Gln-tRNA(Gln) through the transamidation of misacylated Asp-tRNA(Asn) or Glu-tRNA(Gln) in organisms which lack either or both of asparaginyl-tRNA or glutaminyl-tRNA synthetases. The reaction takes place in the presence of glutamine and ATP through an activated phospho-Asp-tRNA(Asn) or phospho-Glu-tRNA(Gln). This chain is Aspartyl/glutamyl-tRNA(Asn/Gln) amidotransferase subunit B, found in Pseudomonas putida (strain W619).